The sequence spans 67 residues: Prokaryotic ubiquitin-like protein Pup (67 aa).

Low complexity predominate over residues 1–11 (MAGQEQQQPQS). The tract at residues 1 to 47 (MAGQEQQQPQSRESEFEDDAPATPPAPGEAQASAATQGVDDLLDEID) is disordered. The tract at residues 25–61 (PAPGEAQASAATQGVDDLLDEIDGVLESNAEEFVRAF) is ARC ATPase binding. The residue at position 67 (Gln-67) is a Deamidated glutamine. An Isoglutamyl lysine isopeptide (Gln-Lys) (interchain with K-? in acceptor proteins) cross-link involves residue Gln-67.

Belongs to the prokaryotic ubiquitin-like protein family. Strongly interacts with the proteasome-associated ATPase ARC through a hydrophobic interface; the interacting region of Pup lies in its C-terminal half. There is one Pup binding site per ARC hexamer ring. Post-translationally, is modified by deamidation of its C-terminal glutamine to glutamate by the deamidase Dop, a prerequisite to the subsequent pupylation process.

It participates in protein degradation; proteasomal Pup-dependent pathway. In terms of biological role, protein modifier that is covalently attached to lysine residues of substrate proteins, thereby targeting them for proteasomal degradation. The tagging system is termed pupylation. This Arthrobacter sp. (strain FB24) protein is Prokaryotic ubiquitin-like protein Pup.